The sequence spans 388 residues: Tryptophan synthase beta chain (388 aa).

Position 86 is an N6-(pyridoxal phosphate)lysine (lysine 86).

It belongs to the TrpB family. As to quaternary structure, tetramer of two alpha and two beta chains. Pyridoxal 5'-phosphate is required as a cofactor.

The enzyme catalyses (1S,2R)-1-C-(indol-3-yl)glycerol 3-phosphate + L-serine = D-glyceraldehyde 3-phosphate + L-tryptophan + H2O. It participates in amino-acid biosynthesis; L-tryptophan biosynthesis; L-tryptophan from chorismate: step 5/5. Its function is as follows. The beta subunit is responsible for the synthesis of L-tryptophan from indole and L-serine. The polypeptide is Tryptophan synthase beta chain (trpB) (Buchnera aphidicola subsp. Acyrthosiphon pisum (strain APS) (Acyrthosiphon pisum symbiotic bacterium)).